We begin with the raw amino-acid sequence, 692 residues long: Threonine--tRNA ligase (692 aa).

Residues 2–59 (AEAHISITVNGEAKEVEASQTGVELFADDKNIIAVRLNGELRDLYTPLHDGDNVESVT) form the TGS domain. The interval 255–561 (DHRKLGQEMD…LLEHYAGAFP (307 aa)) is catalytic. Residues Cys-360, His-411, and His-538 each contribute to the Zn(2+) site.

Belongs to the class-II aminoacyl-tRNA synthetase family. As to quaternary structure, homodimer. Zn(2+) is required as a cofactor.

The protein localises to the cytoplasm. It catalyses the reaction tRNA(Thr) + L-threonine + ATP = L-threonyl-tRNA(Thr) + AMP + diphosphate + H(+). Its function is as follows. Catalyzes the attachment of threonine to tRNA(Thr) in a two-step reaction: L-threonine is first activated by ATP to form Thr-AMP and then transferred to the acceptor end of tRNA(Thr). Also edits incorrectly charged L-seryl-tRNA(Thr). The protein is Threonine--tRNA ligase of Bifidobacterium animalis subsp. lactis (strain AD011).